Consider the following 87-residue polypeptide: UPF0512 protein B (87 aa).

Belongs to the UPF0512 family.

This is UPF0512 protein B from Dictyostelium discoideum (Social amoeba).